The sequence spans 427 residues: WD repeat and SOCS box-containing protein 1 (427 aa).

WD repeat units lie at residues 129 to 170 (SRSI…LLLN), 173 to 213 (DHTD…NMVK), 217 to 256 (GHPN…LIRK), 259 to 298 (GHHN…ILLE), and 314 to 353 (ANDR…PQAV). The SOCS box domain maps to 379–427 (SVHFWECPRSIASLQHLCRMALRRVKTTQQVEALPVPMPLRDFLTYRVV).

As to quaternary structure, component of a probable ECS E3 ubiquitin-protein ligase complex that contains the Elongin BC complex.

Its pathway is protein modification; protein ubiquitination. Probable substrate-recognition component of a SCF-like ECS (Elongin-Cullin-SOCS-box protein) E3 ubiquitin-protein ligase complex which mediates the ubiquitination and subsequent proteasomal degradation of target proteins. In Takifugu rubripes (Japanese pufferfish), this protein is WD repeat and SOCS box-containing protein 1 (wsb1).